A 118-amino-acid polypeptide reads, in one-letter code: Large ribosomal subunit protein uL18 (118 aa).

Belongs to the universal ribosomal protein uL18 family. Part of the 50S ribosomal subunit; part of the 5S rRNA/L5/L18/L25 subcomplex. Contacts the 5S and 23S rRNAs.

Functionally, this is one of the proteins that bind and probably mediate the attachment of the 5S RNA into the large ribosomal subunit, where it forms part of the central protuberance. The sequence is that of Large ribosomal subunit protein uL18 from Rickettsia prowazekii (strain Madrid E).